Consider the following 487-residue polypeptide: Polyamine oxidase 4 (487 aa).

The FAD site is built by glutamate 53, arginine 61, valine 242, and glutamate 429. The Microbody targeting signal motif lies at 485–487 (CRT).

It belongs to the flavin monoamine oxidase family. It depends on FAD as a cofactor. In terms of tissue distribution, widely expressed.

It localises to the peroxisome. It catalyses the reaction spermine + O2 + H2O = 3-aminopropanal + spermidine + H2O2. It carries out the reaction norspermine + O2 + H2O = norspermidine + 3-aminopropanal + H2O2. The enzyme catalyses thermospermine + O2 + H2O = 3-aminopropanal + spermidine + H2O2. Its pathway is amine and polyamine degradation; spermine degradation. Flavoenzyme involved in polyamine back-conversion. Catalyzes the oxidation of the secondary amino group of polyamines, such as spermine. Substrate preference is spermine &gt; thermospermine &gt; norspermine. No activity detected when putrescine, spermidine or N(1)-acetylspermidine are used as substrates. Plays an important role in the regulation of polyamine intracellular concentration. This is Polyamine oxidase 4 from Oryza sativa subsp. japonica (Rice).